Here is a 32-residue protein sequence, read N- to C-terminus: Photosystem I reaction center subunit XII (32 aa).

A helical membrane pass occupies residues 4–26 (ISDSQIIVILLSVFITSILALRL).

The protein belongs to the PsaM family.

The protein resides in the plastid. Its subcellular location is the chloroplast thylakoid membrane. The protein is Photosystem I reaction center subunit XII of Marchantia polymorpha (Common liverwort).